The following is a 125-amino-acid chain: Large ribosomal subunit protein bL17 (125 aa).

It belongs to the bacterial ribosomal protein bL17 family. In terms of assembly, part of the 50S ribosomal subunit. Contacts protein L32.

The chain is Large ribosomal subunit protein bL17 from Acinetobacter baumannii (strain AB307-0294).